The following is a 338-amino-acid chain: MRDKLVAMLELGRKAFESADSAVELQEIRVRFLGKKGELTAIMKGMGQLTPEQRPVVGALANQVKSELEELFEERSRIVGQQEMDKRLKQERVDVTLPGRRNSCGTKHPVTLVIEEITDIFSALGFSVAEGPEIEQDFYNFEALNMPKDHPARDMQDTFYINEDVVLRTHTSPVQIRTMLKHAPPVRVIAPGTVYRRDSDITHTPMFHQVEGFLVDRNITFGDLKGILTSFLSQIFGKGLNVRFRPSFFPFTEPSAEVDIQCVMCKGKGCRVCKNSGWLEILGSGMIDPEVFKSVDYDSETYSGFAFGMGVERIAMLKYGVNDLRLFFENDVRFLRQF.

E253 is a Mg(2+) binding site.

Belongs to the class-II aminoacyl-tRNA synthetase family. Phe-tRNA synthetase alpha subunit type 1 subfamily. In terms of assembly, tetramer of two alpha and two beta subunits. Mg(2+) serves as cofactor.

The protein localises to the cytoplasm. The catalysed reaction is tRNA(Phe) + L-phenylalanine + ATP = L-phenylalanyl-tRNA(Phe) + AMP + diphosphate + H(+). The protein is Phenylalanine--tRNA ligase alpha subunit of Syntrophotalea carbinolica (strain DSM 2380 / NBRC 103641 / GraBd1) (Pelobacter carbinolicus).